The primary structure comprises 89 residues: HssA/B-like protein DDB_G0295685 (89 aa).

It belongs to the hssA/B family.

The sequence is that of HssA/B-like protein DDB_G0295685 from Dictyostelium discoideum (Social amoeba).